The chain runs to 685 residues: Sorbicillinoid biosynthetic cluster transcription factor sor4 (685 aa).

The segment covering 1 to 14 has biased composition (low complexity); it reads MGSSATATTTGEST. The disordered stretch occupies residues 1–20; sequence MGSSATATTTGESTRQQPGL. The segment at residues 22–49 is a DNA-binding region (zn(2)-C6 fungal-type); it reads CEECRRRKARCDRVRPKCGICADSGRNC. Residues 81–112 are disordered; sequence GQNDAPSLPQERDSLGCPTPSEKVSPEGDLVS.

It is found in the nucleus. Functionally, transcription factor that acts as the main regulator of the gene cluster that mediates the biosynthesis of sorbicillinoids, a diverse group of yellow secondary metabolites that restrict growth of competing pathogenic fungi but not of bacteria. This is Sorbicillinoid biosynthetic cluster transcription factor sor4 from Hypocrea jecorina (strain QM6a) (Trichoderma reesei).